We begin with the raw amino-acid sequence, 407 residues long: RNA-binding motif, single-stranded-interacting protein 2 (407 aa).

Met1 is modified (N-acetylmethionine). Residues 29–54 (QQMAPPSPSNSTPNSSSGSNGNDQLS) form a disordered region. The span at 37–50 (SNSTPNSSSGSNGN) shows a compositional bias: low complexity. RRM domains follow at residues 56–129 (TNLY…MAKQ) and 135–220 (TNLY…FADG). Residue Ser106 is modified to Phosphoserine. Position 269 is a phosphothreonine (Thr269). Phosphoserine is present on residues Ser280 and Ser285.

The protein localises to the nucleus. This is RNA-binding motif, single-stranded-interacting protein 2 (RBMS2) from Homo sapiens (Human).